We begin with the raw amino-acid sequence, 931 residues long: Aftiphilin (931 aa).

The interval 1-49 is disordered; the sequence is MEPDIIRMYSSSPPPLDNGAEDDEEDEFGEFGGFSEVSPSGVGFVDFDT. Residues 19–29 show a composition bias toward acidic residues; that stretch reads GAEDDEEDEFG. Residues 28–31 carry the WXXF motif 1 motif; sequence FGEF. Low complexity predominate over residues 33–45; that stretch reads GFSEVSPSGVGFV. Ser-151 bears the Phosphoserine mark. A compositionally biased stretch (polar residues) spans 371–381; the sequence is SVKTSDVNEIG. Residues 371 to 454 form a disordered region; that stretch reads SVKTSDVNEI…PFVTSTQDSM (84 aa). Residue Ser-395 is modified to Phosphoserine. The WXXF motif 2 signature appears at 433-436; that stretch reads FGDF. The span at 439–454 shows a compositional bias: polar residues; that stretch reads ANGTTPPFVTSTQDSM. Positions 476-479 match the WXXF motif 3 motif; it reads FGEF. Disordered stretches follow at residues 494 to 561 and 599 to 636; these read TESD…SSAG and WQSQRTDETMGTLGTPKMHSVSSAASKGAVASGHLQEP. The span at 516-530 shows a compositional bias: basic and acidic residues; the sequence is GGKDSKPDSKLKNGQ. Thr-613 carries the phosphothreonine modification. Low complexity predominate over residues 618 to 631; sequence SVSSAASKGAVASG. Residues 712-714 carry the CLTCL1/Clathrin-binding motif; that stretch reads YQW. The interval 821-825 is clathrin-binding; sequence LLNLD.

In terms of assembly, self-associates. Interacts with GGA1 (via GAE domain). Interacts with GGA3 (via GAE domain), AP1G1 (via GAE domain) and AP1G2 (via GAE domain). Component of the aftiphilin/p200/gamma-synergin complex, at least composed of AFTPH/aftiphilin, HEATR5B/p200a and SYNRG/gamma-synergin, which plays a role in the AP1G1/AP-1-mediated protein trafficking from early to recycling endosomes. Within the complex interacts with HEATR5B/p200a and SYNRG/gamma-synergin; the interactions are direct. Interacts with AP1G1/AP-1; the interaction is required to recruit AFTPH/aftiphilin to the perinuclear region of the cell. Interacts with CLTCL1/Clathrin.

The protein localises to the cytoplasm. It is found in the perinuclear region. The protein resides in the cytoplasmic vesicle. Its subcellular location is the clathrin-coated vesicle. Functionally, component of clathrin-coated vesicles. Component of the aftiphilin/p200/gamma-synergin complex, which plays roles in AP1G1/AP-1-mediated protein trafficking including the trafficking of transferrin from early to recycling endosomes, and the membrane trafficking of furin and the lysosomal enzyme cathepsin D between the trans-Golgi network (TGN) and endosomes. The chain is Aftiphilin (Aftph) from Mus musculus (Mouse).